A 119-amino-acid chain; its full sequence is Large ribosomal subunit protein uL24 (119 aa).

It belongs to the universal ribosomal protein uL24 family. In terms of assembly, part of the 50S ribosomal subunit.

Functionally, one of two assembly initiator proteins, it binds directly to the 5'-end of the 23S rRNA, where it nucleates assembly of the 50S subunit. One of the proteins that surrounds the polypeptide exit tunnel on the outside of the subunit. This chain is Large ribosomal subunit protein uL24, found in Sulfurihydrogenibium sp. (strain YO3AOP1).